We begin with the raw amino-acid sequence, 191 residues long: dCTP deaminase (191 aa).

Residues 112-117, 136-138, Gln-157, Tyr-173, and Gln-183 contribute to the dCTP site; these read KSTYAR and TLE. The active-site Proton donor/acceptor is the Glu-138.

It belongs to the dCTP deaminase family. As to quaternary structure, homotrimer.

It carries out the reaction dCTP + H2O + H(+) = dUTP + NH4(+). The protein operates within pyrimidine metabolism; dUMP biosynthesis; dUMP from dCTP (dUTP route): step 1/2. Its function is as follows. Catalyzes the deamination of dCTP to dUTP. In Psychrobacter arcticus (strain DSM 17307 / VKM B-2377 / 273-4), this protein is dCTP deaminase.